Here is a 141-residue protein sequence, read N- to C-terminus: Vesicle-associated membrane protein 4 (141 aa).

The tract at residues 1–51 is disordered; sequence MPPKFKRHLNDDDVTGSVKSERRNLLEDDSDEEEDFFLRGPSGPRFGPRND. Residues 1–115 are Cytoplasmic-facing; the sequence is MPPKFKRHLN…RRQMWWRGCK (115 aa). Phosphoserine occurs at positions 17 and 30. In terms of domain architecture, v-SNARE coiled-coil homology spans 52 to 112; sequence KIKHVQNQVD…KQLRRQMWWR (61 aa). Residues 116–136 traverse the membrane as a helical; Anchor for type IV membrane protein segment; the sequence is IKAIMALVAAILLLVIIILIV. Residues 137-141 lie on the Vesicular side of the membrane; sequence MKYRT.

Belongs to the synaptobrevin family. Identified in a complex containing STX6, STX12, VAMP4 and VTI1A. Interacts with BAIAP3; this interaction is increased in the presence of calcium.

The protein localises to the golgi apparatus. It localises to the trans-Golgi network membrane. Its function is as follows. Involved in the pathway that functions to remove an inhibitor (probably synaptotagmin-4) of calcium-triggered exocytosis during the maturation of secretory granules. May be a marker for this sorting pathway that is critical for remodeling the secretory response of granule. The chain is Vesicle-associated membrane protein 4 (VAMP4) from Homo sapiens (Human).